The following is a 204-amino-acid chain: AFG2-interacting ribosome maturation factor (204 aa).

As to quaternary structure, part of the 55LCC heterohexameric ATPase complex. Does not associate with pre-60S ribosomal particles.

It is found in the nucleus. It localises to the cytoplasm. Its function is as follows. Part of the 55LCC heterohexameric ATPase complex which is chromatin-associated and promotes replisome proteostasis to maintain replication fork progression and genome stability. Required for replication fork progression, sister chromatid cohesion, and chromosome stability. The ATPase activity is specifically enhanced by replication fork DNA and is coupled to cysteine protease-dependent cleavage of replisome substrates in response to replication fork damage. Uses ATPase activity to process replisome substrates in S-phase, facilitating their proteolytic turnover from chromatin to ensure DNA replication and mitotic fidelity. Involved in the cytoplasmic maturation steps of pre-60S ribosomal particles by promoting the release of shuttling protein RSL24D1/RLP24 from the pre-ribosomal particles. The polypeptide is AFG2-interacting ribosome maturation factor (airim) (Xenopus tropicalis (Western clawed frog)).